The following is a 317-amino-acid chain: Adenosine receptor A3 (317 aa).

Topologically, residues 1 to 14 are extracellular; sequence MPVNSTAVSLASVT. Asparagine 4 is a glycosylation site (N-linked (GlcNAc...) asparagine). The helical transmembrane segment at 15-37 threads the bilayer; that stretch reads YISVEILIGLCAIVGNVLVIWVV. The Cytoplasmic portion of the chain corresponds to 38 to 48; it reads KLNPSLQTTTF. Residues 49–72 traverse the membrane as a helical segment; sequence YFIVSLALADIAVGVLVMPLAIVI. Residues 73–84 are Extracellular-facing; sequence SLGVTIHFYSCL. A disulfide bond links cysteine 83 and cysteine 165. The chain crosses the membrane as a helical span at residues 85–106; it reads LMTCLLMIFTHASIMSLLAIAV. Residues 107–126 are Cytoplasmic-facing; the sequence is DRYLRVKLTVRYRRVTTQRR. The chain crosses the membrane as a helical span at residues 127–148; it reads IWLALGLCWLVSFLVGLTPMFG. At 149-176 the chain is on the extracellular side; sequence WNMKLSSADKNLTFLPCQFRSVMRMDYM. A helical membrane pass occupies residues 177 to 197; it reads VYFSFFTWILIPLVVMCAIYF. At 198-230 the chain is on the cytoplasmic side; it reads DIFYVIRNRLSQNFSGSKETGAFYGREFKTAKS. Residues 231 to 254 form a helical membrane-spanning segment; sequence LSLVLFLFALSWLPLSIINCIIYF. At 255–260 the chain is on the extracellular side; the sequence is NGEVPQ. A helical membrane pass occupies residues 261-283; that stretch reads IVLYLGILLSHANSMMNPIVYAY. At 284–317 the chain is on the cytoplasmic side; it reads KIKKFKETYLLILKACVICQPSKSMDPSIEQTSE. The S-palmitoyl cysteine moiety is linked to residue cysteine 302.

It belongs to the G-protein coupled receptor 1 family. In terms of processing, phosphorylation on Thr-315 and Ser-316 may be crucial for rapid desensitization. Phosphorylation on Thr-315 may be necessary for phosphorylation on Ser-316 to occur.

It localises to the cell membrane. Receptor for adenosine. The activity of this receptor is mediated by G proteins which inhibits adenylyl cyclase. This chain is Adenosine receptor A3 (ADORA3), found in Bos taurus (Bovine).